Reading from the N-terminus, the 212-residue chain is Cytidylate kinase (212 aa).

ATP is bound at residue 7-15 (GPAASGKGT).

This sequence belongs to the cytidylate kinase family. Type 1 subfamily.

It localises to the cytoplasm. It carries out the reaction CMP + ATP = CDP + ADP. It catalyses the reaction dCMP + ATP = dCDP + ADP. The protein is Cytidylate kinase of Bradyrhizobium sp. (strain ORS 278).